A 412-amino-acid polypeptide reads, in one-letter code: Subtilisin-like protease 6 (412 aa).

Residues 1 to 20 (MGFITKAIPIVLAALSTVNG) form the signal peptide. The propeptide occupies 21 to 127 (ARILEAGPHA…VRATTNGTNL (107 aa)). Residues 36–120 (KYIVVMKKDV…FIEPDFVVRA (85 aa)) form the Inhibitor I9 domain. Residues 135–412 (SWGLARVSTR…SKLIYNGSGK (278 aa)) enclose the Peptidase S8 domain. Catalysis depends on charge relay system residues D167 and H198. N-linked (GlcNAc...) asparagine glycans are attached at residues N252, N264, and N325. S358 (charge relay system) is an active-site residue. N408 carries an N-linked (GlcNAc...) asparagine glycan.

Belongs to the peptidase S8 family.

The protein resides in the secreted. In terms of biological role, secreted subtilisin-like serine protease with keratinolytic activity that contributes to pathogenicity. The polypeptide is Subtilisin-like protease 6 (SUB6) (Trichophyton verrucosum (strain HKI 0517)).